A 148-amino-acid chain; its full sequence is MGRFIFVSFGLLVVFLSLSGTGADQDCLPDWSSHERHCYKVINEYKTWEEAEQYCTEEANGGHLVSFHNRQEVAFVVKLGYTILKADVVWIGLRDFWRECQWEWSNGAKLNYKGWSDEPNCFIAYTVGNRWVRRKCSSTHPFVCKSPA.

A signal peptide spans 1-23; that stretch reads MGRFIFVSFGLLVVFLSLSGTGA. 3 cysteine pairs are disulfide-bonded: Cys-27-Cys-38, Cys-55-Cys-144, and Cys-121-Cys-136. Residues 34 to 145 enclose the C-type lectin domain; it reads HERHCYKVIN…CSSTHPFVCK (112 aa).

It belongs to the snaclec family. In terms of assembly, heterodimer; disulfide-linked. As to expression, expressed by the venom gland.

The protein resides in the secreted. In terms of biological role, interferes with one step of hemostasis (modulation of platelet aggregation, or coagulation cascade, for example). The protein is Snaclec 7 of Echis pyramidum leakeyi (Leakey's carpet viper).